The following is a 288-amino-acid chain: Pantothenate synthetase (288 aa).

27–34 (MGALHEGH) lines the ATP pocket. Catalysis depends on His-34, which acts as the Proton donor. (R)-pantoate contacts are provided by Gln-58 and Gln-150. Gln-58 provides a ligand contact to beta-alanine. ATP is bound by residues Leu-173 and 181–184 (YSSR).

The protein belongs to the pantothenate synthetase family. Homodimer.

It localises to the cytoplasm. The catalysed reaction is (R)-pantoate + beta-alanine + ATP = (R)-pantothenate + AMP + diphosphate + H(+). It functions in the pathway cofactor biosynthesis; (R)-pantothenate biosynthesis; (R)-pantothenate from (R)-pantoate and beta-alanine: step 1/1. Its function is as follows. Catalyzes the condensation of pantoate with beta-alanine in an ATP-dependent reaction via a pantoyl-adenylate intermediate. The sequence is that of Pantothenate synthetase from Tropheryma whipplei (strain TW08/27) (Whipple's bacillus).